The following is a 365-amino-acid chain: MEELEGHRGEGRLPPPPPLLPFPKVSVQVYTVPSSSTAASAAAAGGARQAVAPATRDGGDGGGRAAGVLDDPVKARIVSHPRYHRLLAAFLDCHKVGCPAEAAEEIAAAARVREARQRAAAAASRMPPAPEDPELDQFMEDYCKLLVECKEELSRPLQEAEEFLRTVESELNSINSGPPLTALISESKAGLDSSDDDEHEDGSGMEMMEAAEDEDLGIIDPRSDDKALKRHLLRKYSGYLGGLRKELSKKRKKGKLPKEARQKLLTWWELHYRWPNPSEMEKIALAESTGLEQKQINNCFINQRKRHWKPTEEMEFAVMEAYHHQSTDAAAAFYVDVDARLVGATAAAPASAVYTARPDHGVWRA.

Over residues 1 to 11 (MEELEGHRGEG) the composition is skewed to basic and acidic residues. Residues 1–20 (MEELEGHRGEGRLPPPPPLL) are disordered. The ELK domain occupies 227-247 (ALKRHLLRKYSGYLGGLRKEL). The segment at residues 248-311 (SKKRKKGKLP…NQRKRHWKPT (64 aa)) is a DNA-binding region (homeobox; TALE-type).

The protein belongs to the TALE/KNOX homeobox family.

It is found in the nucleus. In terms of biological role, probable transcription factor that may be involved in shoot formation during embryogenesis. The sequence is that of Homeobox protein knotted-1-like 7 (OSH3) from Oryza sativa subsp. japonica (Rice).